The primary structure comprises 312 residues: Putative endo-1,4-beta-xylanase (312 aa).

A GH10 domain is found at 1–301 (MKQQYLLDYE…KPCFYSFLQA (301 aa)). The Proton donor role is filled by Glu-104. Residue Glu-216 is the Nucleophile of the active site.

The protein belongs to the glycosyl hydrolase 10 (cellulase F) family.

The enzyme catalyses Endohydrolysis of (1-&gt;4)-beta-D-xylosidic linkages in xylans.. Its pathway is glycan degradation; xylan degradation. Could be a xylanase. The chain is Putative endo-1,4-beta-xylanase from Caldicellulosiruptor saccharolyticus (Caldocellum saccharolyticum).